Consider the following 364-residue polypeptide: Peptidoglycan transport system permease protein YejB (364 aa).

The next 6 membrane-spanning stretches (helical) occupy residues 9 to 29 (LALM…VIQF), 134 to 154 (SASL…PLGI), 171 to 191 (IIII…IVLF), 219 to 239 (IIDY…SAFA), 283 to 303 (IVIA…SLLI), and 325 to 345 (YPIV…VGLL). Residues 131 to 350 (LPVSASLGFW…VVGLLSDLIY (220 aa)) form the ABC transmembrane type-1 domain.

It belongs to the binding-protein-dependent transport system permease family. In terms of assembly, the complex is composed of one ATP-binding protein (YejF), two transmembrane proteins (YejB and YejE) and a solute-binding protein (YepA or YejA).

The protein localises to the cell inner membrane. Functionally, part of the ABC transporter complex YejBEF-YepA involved in the uptake of muropeptides, the breakdown products of cell wall peptidoglycan. The import of muropeptides into the cell enables peptidoglycan recycling, which is vital for cell wall integrity in this bacterium. Is also probably part of the ABC transporter complex YejABEF, which is likely involved in broad-spectrum peptide import. Responsible for the translocation of the substrate across the membrane. The protein is Peptidoglycan transport system permease protein YejB of Agrobacterium fabrum (strain C58 / ATCC 33970) (Agrobacterium tumefaciens (strain C58)).